A 176-amino-acid chain; its full sequence is MSKVKKNDETLSEVLVDVNRVTKVVKGGRRFAFSAYVVVGDKAGRVGAGHGKAKEVNEARGKAKQAAKKRMMKVPLYQNRTIHHDVVGKSGAAKVILRRAKAGTGIIAGGSMRAIFDSLGVHDIVAKSIGSTNVYAMISATFDALNKLASPKSIAMRRDKKVNEIFVKSSDIQVNE.

The S5 DRBM domain maps to 11-74 (LSEVLVDVNR…QAAKKRMMKV (64 aa)).

This sequence belongs to the universal ribosomal protein uS5 family. As to quaternary structure, part of the 30S ribosomal subunit. Contacts proteins S4 and S8.

Functionally, with S4 and S12 plays an important role in translational accuracy. In terms of biological role, located at the back of the 30S subunit body where it stabilizes the conformation of the head with respect to the body. The sequence is that of Small ribosomal subunit protein uS5 from Rickettsia massiliae (strain Mtu5).